Consider the following 541-residue polypeptide: MDSQRNILLIALALVSFLLFQQWQVAKNPAPQATQQAQSTGAAPAPSFSDELDPTPAQNVAAKAKTITVSTDVLTLSIDTLGGDVVSAKLNQYSEELNSPESFVLLQNTQGHQFIAQSGLVGPQGIDVTSNNRPAYQVSADSFTLAEGQDELRIPMTYQANGIDYTKTFILKRGSYAVDVVFDVANNSGSEATLGMYAHLRQNLLDSGGNLAMPTYRGGAYSTSDVRYKKYSFDDMKDRNLSAPNDVTVNWVAMIQHYFASAWIPRDEPQAQLYSRVINNLGDMGIRTPNKTIANGDKAEFEATLWVGPKLQDQMAATAPNLDLVVDYGWLWFIAKPLHWLLSVIQTFVGNWGVAIICLTFIVRGAMYPLTKAQYTSMAKMRMLQPKLQAMRERIGDDRQRMSQEMMELYKKEKVNPLGGCLPILLQMPIFIALYWALMESVELRHSPFFGWIHDLSAQDPYYILPLLMGASMFVIQKMSPTTITDPMQQKIMTFMPVMFTFFFLWFPSGLVLYWLVSNIVTLIQQTLIYKALEKKGLHSK.

Residues 6–26 (NILLIALALVSFLLFQQWQVA) traverse the membrane as a helical segment. Over residues 31-47 (PQATQQAQSTGAAPAPS) the composition is skewed to low complexity. The segment at 31 to 55 (PQATQQAQSTGAAPAPSFSDELDPT) is disordered. The next 4 membrane-spanning stretches (helical) occupy residues 343–363 (SVIQTFVGNWGVAIICLTFIV), 418–438 (LGGCLPILLQMPIFIALYWAL), 456–476 (LSAQDPYYILPLLMGASMFVI), and 497–517 (PVMFTFFFLWFPSGLVLYWLV).

It belongs to the OXA1/ALB3/YidC family. Type 1 subfamily. In terms of assembly, interacts with the Sec translocase complex via SecD. Specifically interacts with transmembrane segments of nascent integral membrane proteins during membrane integration.

It is found in the cell inner membrane. Required for the insertion and/or proper folding and/or complex formation of integral membrane proteins into the membrane. Involved in integration of membrane proteins that insert both dependently and independently of the Sec translocase complex, as well as at least some lipoproteins. Aids folding of multispanning membrane proteins. In Vibrio cholerae serotype O1 (strain ATCC 39541 / Classical Ogawa 395 / O395), this protein is Membrane protein insertase YidC.